A 333-amino-acid chain; its full sequence is 2-haloacrylate reductase (333 aa).

153 to 159 (AAAGGMG) contributes to the NADP(+) binding site.

This sequence belongs to the zinc-containing alcohol dehydrogenase family.

The catalysed reaction is (S)-2-chloropropanoate + NADP(+) = 2-chloroacrylate + NADPH + H(+). Involved in the degradation of unsaturated organohalogen compounds. Catalyzes the NADPH-dependent reduction of the carbon-carbon double bond of 2-chloroacrylate to produce (S)-2-chloropropionate, which is probably further metabolized to (R)-lactate by (S)-2-haloacid dehalogenase. Can also use 2-bromoacrylate as substrate. Does not act on acrylate, methacrylate, 1,4-benzoquinone and 1,4-naphthoquinone. In Burkholderia sp, this protein is 2-haloacrylate reductase.